Reading from the N-terminus, the 305-residue chain is Mas-related G-protein coupled receptor member A8 (305 aa).

At 1-17 (MDKTILGSIDIETLIRH) the chain is on the extracellular side. The chain crosses the membrane as a helical span at residues 18 to 38 (LMIIIFGLVGLTGNAIVFWLL). The Cytoplasmic segment spans residues 39 to 46 (GFHLHRNA). Residues 47-67 (FLVYILNLALADFFYLLCHII) form a helical membrane-spanning segment. Over 68 to 85 (NSIMFLLKVPSPNIILDH) the chain is Extracellular. A helical membrane pass occupies residues 86–106 (CFYTIMIVLYITGLSMLSAIS). Over 107–129 (TERCLSVLCPIWYRCHRPEHTST) the chain is Cytoplasmic. A helical membrane pass occupies residues 130–150 (AMCAVIWVMSLLISILNGYFC). N-linked (GlcNAc...) asparagine glycosylation is found at Asn-151 and Asn-159. Residues 151 to 172 (NFSSPKYVNNSVCQASDIFIRT) lie on the Extracellular side of the membrane. Residues 173-193 (YPIFLFVLLCLSTLALLARLF) traverse the membrane as a helical segment. Residues 194–207 (SGAGKRKFTRLFVT) are Cytoplasmic-facing. Residues 208–228 (IMLAILVFLLCGLPLGFFWFL) traverse the membrane as a helical segment. Over 229-243 (SPWIEDRFIVLDYRL) the chain is Extracellular. The chain crosses the membrane as a helical span at residues 244-264 (FFASVVLTVVNSCANPIIYFF). At 265-305 (VGSFRHRLKQQTLKMFLQRALQDTPETPENMVEMSRSKAEP) the chain is on the cytoplasmic side.

It belongs to the G-protein coupled receptor 1 family. Mas subfamily. In terms of tissue distribution, expressed in a subset of sensory neurons that includes nociceptors. Expressed in the subclass of non-peptidergic sensory neurons that are IB4(+) and VR1(-).

It is found in the cell membrane. Orphan receptor. May be a receptor for RFamide-family neuropeptides such as NPFF and NPAF, which are analgesic in vivo. May regulate nociceptor function and/or development, including the sensation or modulation of pain. The sequence is that of Mas-related G-protein coupled receptor member A8 (Mrgpra8) from Mus musculus (Mouse).